Consider the following 141-residue polypeptide: MVHSQLPVAGPLRLLCALLLLPSATMIPGGLSPRSVTDPDVQEAAEFAVQEYNALSANAYYYKQLRIVEAQSQVVSGAKYYLTMELMKTKCAKTTGKPKVYKEIQNCELPPKAQQEKLTCHFQVWSRPWLGKIELTKMSCN.

An N-terminal signal peptide occupies residues 1–26 (MVHSQLPVAGPLRLLCALLLLPSATM). In terms of domain architecture, Cystatin spans 29–129 (GGLSPRSVTD…CHFQVWSRPW (101 aa)). The Secondary area of contact signature appears at 73–77 (QVVSG). 2 disulfide bridges follow: C91/C107 and C120/C140.

Belongs to the cystatin family. In terms of tissue distribution, expressed at a low level by the venom gland (at protein level).

It is found in the secreted. Functionally, inhibits various C1 cysteine proteases including cathepsin L, papain and cathepsin B. This protein has no toxic activity and its function in the venom is unknown. It may play a role as a housekeeping or regulatory protein. The polypeptide is Cystatin (Pseudechis australis (Mulga snake)).